We begin with the raw amino-acid sequence, 138 residues long: Phosphoribosyl-AMP cyclohydrolase (138 aa).

Asp84 is a Mg(2+) binding site. Cys85 is a binding site for Zn(2+). Mg(2+) contacts are provided by Asp86 and Asp88. Residues Cys102 and Cys109 each contribute to the Zn(2+) site.

The protein belongs to the PRA-CH family. In terms of assembly, homodimer. Mg(2+) is required as a cofactor. The cofactor is Zn(2+).

Its subcellular location is the cytoplasm. The enzyme catalyses 1-(5-phospho-beta-D-ribosyl)-5'-AMP + H2O = 1-(5-phospho-beta-D-ribosyl)-5-[(5-phospho-beta-D-ribosylamino)methylideneamino]imidazole-4-carboxamide. It functions in the pathway amino-acid biosynthesis; L-histidine biosynthesis; L-histidine from 5-phospho-alpha-D-ribose 1-diphosphate: step 3/9. Catalyzes the hydrolysis of the adenine ring of phosphoribosyl-AMP. This is Phosphoribosyl-AMP cyclohydrolase from Burkholderia multivorans (strain ATCC 17616 / 249).